Here is a 465-residue protein sequence, read N- to C-terminus: Cysteine--tRNA ligase (465 aa).

Cys-27 contributes to the Zn(2+) binding site. The short motif at 29–39 (PTVYDDAHLGH) is the 'HIGH' region element. Positions 207, 237, and 241 each coordinate Zn(2+). The 'KMSKS' region signature appears at 269-273 (KMSKS). Residue Lys-272 participates in ATP binding.

It belongs to the class-I aminoacyl-tRNA synthetase family. In terms of assembly, monomer. Zn(2+) serves as cofactor.

Its subcellular location is the cytoplasm. The catalysed reaction is tRNA(Cys) + L-cysteine + ATP = L-cysteinyl-tRNA(Cys) + AMP + diphosphate. This chain is Cysteine--tRNA ligase, found in Helicobacter pylori (strain Shi470).